Consider the following 374-residue polypeptide: MAIRKKSNKNPPVLSHEFVLQNHADIVSCLAMLFLLGLMFEITAKGAIIFVALQYNVTRPATEEQAAESASLYYYGIKDLATVFFYMLVAIIVHAIIQEYVLDKINRRMHFSKTKHSKFNESGQLSAFYLFACVWGTFILVSENYISDPTILWRAYPHNLMTFQMKFFYISQLAYWLHAFPELYFQKTKKEDIPRQLVYIGLYLFHIAGAYLLNLNHLGLVLLVLHYFVEFLFHISRLFYFSDEKYQKGFSLWAVLFVLGRLLTLILSVLTVGFGLARAENQKLDFSTGNFNVLAVRIAVLASICITQAFMMWKFINFQLRRWREHSAFQAPPVKRKPAVTKGRSSRKGTENGVNGTVTSNGADSPRSRKEKSS.

The Cytoplasmic segment spans residues 1–32; sequence MAIRKKSNKNPPVLSHEFVLQNHADIVSCLAM. A helical membrane pass occupies residues 33 to 53; the sequence is LFLLGLMFEITAKGAIIFVAL. The Lumenal portion of the chain corresponds to 54–81; sequence QYNVTRPATEEQAAESASLYYYGIKDLA. Asn56 is a glycosylation site (N-linked (GlcNAc...) asparagine). A helical transmembrane segment spans residues 82 to 102; the sequence is TVFFYMLVAIIVHAIIQEYVL. At 103–121 the chain is on the cytoplasmic side; sequence DKINRRMHFSKTKHSKFNE. The TLC domain maps to 117–326; it reads SKFNESGQLS…NFQLRRWREH (210 aa). Residues 122–142 form a helical membrane-spanning segment; it reads SGQLSAFYLFACVWGTFILVS. At 143–159 the chain is on the lumenal side; the sequence is ENYISDPTILWRAYPHN. Residues 160 to 180 traverse the membrane as a helical segment; sequence LMTFQMKFFYISQLAYWLHAF. Topologically, residues 181-192 are cytoplasmic; sequence PELYFQKTKKED. The chain crosses the membrane as a helical span at residues 193–213; it reads IPRQLVYIGLYLFHIAGAYLL. Position 214 (Asn214) is a topological domain, lumenal. Residues 215-235 form a helical membrane-spanning segment; sequence LNHLGLVLLVLHYFVEFLFHI. At 236–251 the chain is on the cytoplasmic side; sequence SRLFYFSDEKYQKGFS. Residues 252–272 form a helical membrane-spanning segment; it reads LWAVLFVLGRLLTLILSVLTV. The Lumenal portion of the chain corresponds to 273 to 297; that stretch reads GFGLARAENQKLDFSTGNFNVLAVR. The chain crosses the membrane as a helical span at residues 298–318; the sequence is IAVLASICITQAFMMWKFINF. The Cytoplasmic segment spans residues 319–374; sequence QLRRWREHSAFQAPPVKRKPAVTKGRSSRKGTENGVNGTVTSNGADSPRSRKEKSS. Positions 333-374 are disordered; that stretch reads PVKRKPAVTKGRSSRKGTENGVNGTVTSNGADSPRSRKEKSS. Over residues 334–347 the composition is skewed to basic residues; it reads VKRKPAVTKGRSSR. Positions 352–363 are enriched in polar residues; that stretch reads NGVNGTVTSNGA. Ser365 bears the Phosphoserine mark.

This sequence belongs to the TRAM family. Interacts with SEC61B. May interact with Derlin-1/DERL1. N-glycosylated.

The protein localises to the endoplasmic reticulum membrane. In terms of biological role, involved in the translocation of nascent protein chains into or through the endoplasmic reticulum (ER) membrane by facilitating the proper chain positioning at the SEC61 channel. Regulates the exposure of nascent secretory protein chain to the cytosol during translocation into the ER. May affect the phospholipid bilayer in the vicinity of the lateral gate of the SEC61 channel, thereby facilitating ER protein transport. Intimately associates with transmembrane (TM) domain of nascent membrane proteins during the entire integration process into the ER membrane. Associates with the second TM domain of G-protein-coupled receptor opsin/OPSD nascent chain in the ER membrane, which may facilitate its integration into the membrane. Under conditions of ER stress, participates in the disposal of misfolded ER membrane proteins during the unfolded protein response (UPR), an integrated stress response (ISR) pathway, by selectively retrotranslocating misfolded ER-membrane proteins from the ER into the cytosol where they are ubiquitinated and degraded by the proteasome. This chain is Translocating chain-associated membrane protein 1, found in Rattus norvegicus (Rat).